Reading from the N-terminus, the 140-residue chain is Midkine (140 aa).

The N-terminal stretch at 1 to 20 (MQHRSFFLLALVALLAVTTA) is a signal peptide. 5 disulfide bridges follow: cysteine 34–cysteine 58, cysteine 42–cysteine 67, cysteine 49–cysteine 71, cysteine 81–cysteine 113, and cysteine 91–cysteine 123.

This sequence belongs to the pleiotrophin family. In terms of assembly, homodimer. Interacts with ALK. Interacts with LRP1; promotes neuronal survival. Interacts with LRP2. Interacts with NCAM1. Interacts (via C-terminal) with PTPRZ1 (via chondroitin sulfate chains); this interaction is inhibited by PTN; this interaction promotes neuronal migration. Interacts with NCL; this interaction promotes NCL clustering and lateral movements of this complex into lipid rafts leading to MDK internalization. Interacts with LRP6 and LRP8: this interaction is calcium dependent. Interacts with ITGA4. Interacts with ITGA6. Interacts with ITGB1. Interacts with ITGA4:ITGB1 complex; this interaction mediates MDK-induced osteoblast cells migration through PXN phosphorylation. Interacts with ITGA6:ITGB1 complex; this interaction mediates MDK-induced neurite outgrowth. Interacts with NOTCH2; this interactio mediates a nuclear accumulation of NOTCH2 and therefore activation of NOTCH2 signaling leading to interaction between HES1 and STAT3. Interacts with GPC2 (via heparan sulfate chain); this interaction is inhibited by heparin followed by chondroitin sulfate E; this interaction induces GPC2 clustering through heparan sulfate chain; this interaction induces neuronal cell adhesion and neurite outgrowth. Interacts with SDC3; this interaction induces SDC3 clustering; this interaction induces neuronal cell adhesion and neurite outgrowth. Interacts with SDC1. Interacts with CSPG5; this interaction promotes elongation of oligodendroglial precursor-like cells. In terms of tissue distribution, expressed at a low level in arteries, and at higher levels in newly formed neointima. In brain, expressed in the caudate nucleus and the brain stem.

It is found in the secreted. Functionally, developmentally regulated, secreted growth factor homologous to pleiotrophin (PTN), which has heparin binding activity. Binds anaplastic lymphoma kinase (ALK) which induces ALK activation and subsequent phosphorylation of the insulin receptor substrate (IRS1), followed by the activation of mitogen-activated protein kinase (MAPK) and PI3-kinase, and the induction of cell proliferation. Involved in neointima formation after arterial injury, possibly by mediating leukocyte recruitment. Also involved in early fetal adrenal gland development. In terms of biological role, secreted protein that functions as a cytokine and growth factor and mediates its signal through cell-surface proteoglycan and non-proteoglycan receptors. Binds cell-surface proteoglycan receptors via their chondroitin sulfate (CS) groups. Thereby regulates many processes like inflammatory response, cell proliferation, cell adhesion, cell growth, cell survival, tissue regeneration, cell differentiation and cell migration. Participates in inflammatory processes by exerting two different activities. Firstly, mediates neutrophils and macrophages recruitment to the sites of inflammation both by direct action by cooperating namely with ITGB2 via LRP1 and by inducing chemokine expression. This inflammation can be accompanied by epithelial cell survival and smooth muscle cell migration after renal and vessel damage, respectively. Secondly, suppresses the development of tolerogenic dendric cells thereby inhibiting the differentiation of regulatory T cells and also promote T cell expansion through NFAT signaling and Th1 cell differentiation. Promotes tissue regeneration after injury or trauma. After heart damage negatively regulates the recruitment of inflammatory cells and mediates cell survival through activation of anti-apoptotic signaling pathways via MAPKs and AKT pathways through the activation of angiogenesis. Also facilitates liver regeneration as well as bone repair by recruiting macrophage at trauma site and by promoting cartilage development by facilitating chondrocyte differentiation. Plays a role in brain by promoting neural precursor cells survival and growth through interaction with heparan sulfate proteoglycans. Binds PTPRZ1 and promotes neuronal migration and embryonic neurons survival. Binds SDC3 or GPC2 and mediates neurite outgrowth and cell adhesion. Binds chondroitin sulfate E and heparin leading to inhibition of neuronal cell adhesion induced by binding with GPC2. Binds CSPG5 and promotes elongation of oligodendroglial precursor-like cells. Also binds ITGA6:ITGB1 complex; this interaction mediates MDK-induced neurite outgrowth. Binds LRP1; promotes neuronal survival. Binds ITGA4:ITGB1 complex; this interaction mediates MDK-induced osteoblast cells migration through PXN phosphorylation. Binds anaplastic lymphoma kinase (ALK) which induces ALK activation and subsequent phosphorylation of the insulin receptor substrate (IRS1), followed by the activation of mitogen-activated protein kinase (MAPK) and PI3-kinase, and the induction of cell proliferation. Promotes epithelial to mesenchymal transition through interaction with NOTCH2. During arteriogenesis, plays a role in vascular endothelial cell proliferation by inducing VEGFA expression and release which in turn induces nitric oxide synthase expression. Moreover activates vasodilation through nitric oxide synthase activation. Negatively regulates bone formation in response to mechanical load by inhibiting Wnt/beta-catenin signaling in osteoblasts. In addition plays a role in hippocampal development, working memory, auditory response, early fetal adrenal gland development and the female reproductive system. In Rattus norvegicus (Rat), this protein is Midkine.